A 235-amino-acid polypeptide reads, in one-letter code: UPF0758 protein Swol_1642 (235 aa).

The MPN domain occupies 109-235; it reads IIKSPEDVQE…YCSLKARGLI (127 aa). Residues His184, His186, and Asp197 each contribute to the Zn(2+) site. The JAMM motif signature appears at 184 to 197; the sequence is HNHPSGDPTPSQED.

It belongs to the UPF0758 family.

The protein is UPF0758 protein Swol_1642 of Syntrophomonas wolfei subsp. wolfei (strain DSM 2245B / Goettingen).